Consider the following 315-residue polypeptide: Olfactory receptor 3A1 (315 aa).

Residues 1–28 (MQPESGANGTVIAEFILLGLLEAPGLQP) are Extracellular-facing. The N-linked (GlcNAc...) asparagine glycan is linked to N8. A helical membrane pass occupies residues 29 to 52 (VVFVLFLFAYLVTVGGNLSILAAV). The Cytoplasmic portion of the chain corresponds to 53 to 60 (LVEPELHT). Residues 61–82 (PMYFFLGNLSVLDVGCISVTVP) form a helical membrane-spanning segment. Over 83–103 (SMLSRLLSRKRAVPCGACLTQ) the chain is Extracellular. A disulfide bridge links C100 with C192. The chain crosses the membrane as a helical span at residues 104-123 (LFFFHLFVGVDCFLLIAMAY). The Cytoplasmic portion of the chain corresponds to 124 to 143 (DRFLAICRPLTYSTRMSQTV). The helical transmembrane segment at 144-161 (QRMLVAASWACAFTNALT) threads the bilayer. Topologically, residues 162 to 199 (HTVAMSTLNFCGPNVINHFYCDLPQLCQLSCSSTQLSE) are extracellular. The helical transmembrane segment at 200-223 (LLLFAVGFIMAGTSMALIVISYIH) threads the bilayer. The Cytoplasmic segment spans residues 224–240 (VAAAVLRIRSVEGRKKA). The helical transmembrane segment at 241-264 (FSTCGSHLTVVAIFYGSGIFNYMR) threads the bilayer. Over 265 to 275 (LGSTKLSDKDK) the chain is Extracellular. A helical membrane pass occupies residues 276–295 (AVGIFNTVINPMLNPIIYSF). Topologically, residues 296–315 (RNPDVQSAIWRMLTGRRSLA) are cytoplasmic.

Belongs to the G-protein coupled receptor 1 family.

The protein resides in the cell membrane. Its function is as follows. Odorant receptor. This chain is Olfactory receptor 3A1 (OR3A1), found in Gorilla gorilla gorilla (Western lowland gorilla).